We begin with the raw amino-acid sequence, 622 residues long: Kelch-like protein 14 (622 aa).

The region spanning 33-145 (CDVTLTAQGQ…LYTANVTLSL (113 aa)) is the BTB domain. The disordered stretch occupies residues 73–108 (ALGPGAQDGLGGAPPKEPPPPPQEEPGTPSSSPEDK). The span at 87-96 (PKEPPPPPQE) shows a compositional bias: pro residues. 6 Kelch repeats span residues 317–366 (MLLL…EVEN), 367–418 (FLFV…RLDK), 419–465 (NLYV…VHNG), 467–512 (IYIS…VMND), 514–564 (LYAI…VLDD), and 566–614 (IYLV…TVIL).

The protein localises to the cytoplasm. The protein resides in the cytosol. Its subcellular location is the endoplasmic reticulum membrane. This is Kelch-like protein 14 (KLHL14) from Gallus gallus (Chicken).